A 418-amino-acid chain; its full sequence is Tyrosine--tRNA ligase (418 aa).

Y34 contacts L-tyrosine. The short motif at 39–48 is the 'HIGH' region element; sequence PTADSLHLGH. The L-tyrosine site is built by Y169 and Q173. A 'KMSKS' region motif is present at residues 229–233; the sequence is KFGKS. K232 serves as a coordination point for ATP. The region spanning 352-418 is the S4 RNA-binding domain; the sequence is LNLVDMLVTA…GKKKYAVLTY (67 aa).

This sequence belongs to the class-I aminoacyl-tRNA synthetase family. TyrS type 1 subfamily. Homodimer.

It is found in the cytoplasm. It catalyses the reaction tRNA(Tyr) + L-tyrosine + ATP = L-tyrosyl-tRNA(Tyr) + AMP + diphosphate + H(+). In terms of biological role, catalyzes the attachment of tyrosine to tRNA(Tyr) in a two-step reaction: tyrosine is first activated by ATP to form Tyr-AMP and then transferred to the acceptor end of tRNA(Tyr). In Streptococcus pyogenes serotype M5 (strain Manfredo), this protein is Tyrosine--tRNA ligase.